We begin with the raw amino-acid sequence, 726 residues long: PWWP domain-containing protein 2 (726 aa).

Residues M1–S10 are compositionally biased toward basic and acidic residues. Residues M1–M26 form a disordered region. Polar residues predominate over residues S12–M26. Residues D199 to H260 form the PWWP domain. The interval A392 to D441 is disordered. The segment covering N426 to V435 has biased composition (polar residues). Short sequence motifs (nuclear localization signal) lie at residues K460–A467 and K495–S502. 2 disordered regions span residues E472–A545 and T568–E726. Residues E494 to K512 are compositionally biased toward basic residues. The span at S606 to H634 shows a compositional bias: polar residues. Over residues L658–I688 the composition is skewed to basic and acidic residues.

Belongs to the PDP family. As to quaternary structure, interacts with DEK3. Binds to MSI4/FVE and MSI5. Component of the PRC2 (polycomb repressive complex 2) complex which regulates histone methylation on histone H3K27.

The protein localises to the nucleus. Its function is as follows. Together with PDP1, PDP3 and PDP6, interacts with MSI4/FVE and MSI5 to suppress FLC, MAF4 and MAF5 expression by regulating the function of the PRC2 complex and modulating H3K27me3 level, thereby promoting flowering. This Arabidopsis thaliana (Mouse-ear cress) protein is PWWP domain-containing protein 2.